A 215-amino-acid chain; its full sequence is Adenylate kinase (215 aa).

An ATP-binding site is contributed by 10–15; it reads GTGKGT. An NMP region spans residues 30-59; the sequence is STGHILRKISTKKTLFGEKIKNIINSGKLV. AMP is bound by residues Thr-31, Arg-36, 57–59, 85–88, and Gln-92; these read KLV and GFPR. The LID stretch occupies residues 122–157; that stretch reads TRTINPITGTIYNNVIQKNSELKNLKINTLKSRLDD. ATP is bound by residues Arg-123 and 132–133; that span reads IY. Arg-154 and Arg-165 together coordinate AMP. Asn-198 contacts ATP.

The protein belongs to the adenylate kinase family. In terms of assembly, monomer.

The protein localises to the cytoplasm. The catalysed reaction is AMP + ATP = 2 ADP. It participates in purine metabolism; AMP biosynthesis via salvage pathway; AMP from ADP: step 1/1. Its function is as follows. Catalyzes the reversible transfer of the terminal phosphate group between ATP and AMP. Plays an important role in cellular energy homeostasis and in adenine nucleotide metabolism. The sequence is that of Adenylate kinase from Buchnera aphidicola subsp. Baizongia pistaciae (strain Bp).